Consider the following 376-residue polypeptide: MKFELDTTDGRARRGRLVFERGVVETPAFMPVGTYGTVKGMTPEEVQDTGAQIILGNTFHLWLRPGQEIMKLHGDLHDFMQWKGPILTDSGGFQVFSLGDIRKITEKGVHFRNPINGDAIFLDPEKSMEIQYDLGSDIVMIFDECTPYPADWDYAKRSMEMSLRWAQRSRDRFDSLGNKNALFGIIQGSVYEDLRDVSVKGLVDIGFDGYAVGGLAVGEPKEDMHRILEHVCPQLPQDKPRYLMGVGKPQDLVEGVRRGVDMFDCVMPTRNARNGHLFVSDGVVKIRNAKYKDDISPLDAECDCYTCRNYSRAYLYHLDRCNEILGARLNTIHNLRYYQRLMAGLRQAIEEGKLEHFVSEFYQRTGAAVPPITSDN.

Aspartate 89 acts as the Proton acceptor in catalysis. Substrate contacts are provided by residues 89 to 93, aspartate 143, glutamine 187, and glycine 214; that span reads DSGGF. The segment at 245 to 251 is RNA binding; sequence GVGKPQD. Aspartate 264 acts as the Nucleophile in catalysis. The RNA binding; important for wobble base 34 recognition stretch occupies residues 269 to 273; sequence TRNAR. Zn(2+)-binding residues include cysteine 302, cysteine 304, cysteine 307, and histidine 333.

This sequence belongs to the queuine tRNA-ribosyltransferase family. As to quaternary structure, homodimer. Within each dimer, one monomer is responsible for RNA recognition and catalysis, while the other monomer binds to the replacement base PreQ1. The cofactor is Zn(2+).

The catalysed reaction is 7-aminomethyl-7-carbaguanine + guanosine(34) in tRNA = 7-aminomethyl-7-carbaguanosine(34) in tRNA + guanine. It participates in tRNA modification; tRNA-queuosine biosynthesis. Functionally, catalyzes the base-exchange of a guanine (G) residue with the queuine precursor 7-aminomethyl-7-deazaguanine (PreQ1) at position 34 (anticodon wobble position) in tRNAs with GU(N) anticodons (tRNA-Asp, -Asn, -His and -Tyr). Catalysis occurs through a double-displacement mechanism. The nucleophile active site attacks the C1' of nucleotide 34 to detach the guanine base from the RNA, forming a covalent enzyme-RNA intermediate. The proton acceptor active site deprotonates the incoming PreQ1, allowing a nucleophilic attack on the C1' of the ribose to form the product. After dissociation, two additional enzymatic reactions on the tRNA convert PreQ1 to queuine (Q), resulting in the hypermodified nucleoside queuosine (7-(((4,5-cis-dihydroxy-2-cyclopenten-1-yl)amino)methyl)-7-deazaguanosine). The polypeptide is Queuine tRNA-ribosyltransferase (Erwinia tasmaniensis (strain DSM 17950 / CFBP 7177 / CIP 109463 / NCPPB 4357 / Et1/99)).